The following is a 492-amino-acid chain: KAT8 regulatory NSL complex subunit 2 (492 aa).

A Glycyl lysine isopeptide (Lys-Gly) (interchain with G-Cter in SUMO2) cross-link involves residue Lys-78. The segment at 127–182 (LGSQTPESSRSEASRILDEDSWSDGEQEPITVDQTWRGDPDSEADSIDSDQEDPLK) is disordered. At Thr-131 the chain carries Phosphothreonine. A compositionally biased stretch (basic and acidic residues) spans 135–144 (SRSEASRILD). 5 positions are modified to phosphoserine: Ser-147, Ser-149, Ser-168, Ser-172, and Ser-175. Over residues 167 to 178 (DSEADSIDSDQE) the composition is skewed to acidic residues. The tract at residues 308–364 (DVRCSNQSLPMTRHCLTHICQDTNQVLFKCCQGSEEVPCNKPVPVSLSEDPCCPLHF) is required for interaction with other NSL complex members. Residues 455–492 (AGDGCRSQGSRNSEKGSAPLSQSGLATANGKPEPTSIS) are disordered.

As to quaternary structure, component of the NSL complex at least composed of KAT8/MOF, KANSL1, KANSL2, KANSL3, MCRS1, PHF20, OGT1/OGT, WDR5 and HCFC1.

Its subcellular location is the nucleus. It localises to the mitochondrion. Non-catalytic component of the NSL histone acetyltransferase complex, a multiprotein complex that mediates histone H4 acetylation at 'Lys-5'- and 'Lys-8' (H4K5ac and H4K8ac) at transcription start sites and promotes transcription initiation. Required for NSL complex stability and for transcription of intraciliary transport genes in both ciliated and non-ciliated cells by regulating histone H4 acetylation at 'Lys-5'- and 'Lys-12' (H4K5ac and H4K12ac). This is necessary for cilium assembly in ciliated cells and for organization of the microtubule cytoskeleton in non-ciliated cells. Required within the NSL complex to maintain nuclear architecture stability by promoting KAT8-mediated acetylation of lamin LMNA. This is KAT8 regulatory NSL complex subunit 2 (KANSL2) from Pongo abelii (Sumatran orangutan).